Consider the following 281-residue polypeptide: Short neuropeptide F (281 aa).

The first 30 residues, 1 to 30, serve as a signal peptide directing secretion; that stretch reads MFHLKRELSQGCALALICLVSLQMQQPAQA. The propeptide occupies 31 to 64; the sequence is EVSSAQGTPLSNLYDNLLQREYAGPVVFPNHQVE. A phenylalanine amide mark is found at phenylalanine 77 and phenylalanine 111. The propeptide occupies 115-165; it reads DPSLPQMRRTAYDDLLERELTLNSQQQQQQLGTEPDSDLGADYDGLYERVV. The tract at residues 137–156 is disordered; it reads NSQQQQQQLGTEPDSDLGAD. Tryptophan amide is present on tryptophan 173. The propeptide occupies 176 to 246; sequence SVPQFEANNA…NDTSEFQREV (71 aa). The disordered stretch occupies residues 226-281; it reads ANDEDTDTDLNNDTSEFQREVRKPMRLRWGRSTGKAPSEQKHTPEETSSIPPKTQN. A Tryptophan amide modification is found at tryptophan 254. Residues 257-281 constitute a propeptide that is removed on maturation; the sequence is STGKAPSEQKHTPEETSSIPPKTQN. Positions 271–281 are enriched in polar residues; it reads ETSSIPPKTQN.

This sequence belongs to the NPY family. As to expression, stage 17 embryos show expression in the two brain hemispheres (neural cells located in the dorsal posterior region), the connected ventral ganglion (pairs of neural cells along the ventral midline) and the peripheral nervous system (expressed in the antennal-maxillary sensory cells). In the brain hemispheres of the feeding third instar larva, expression in neural cells is located in the dorsal-anterior region of the protocerebrum. In the larval ventral ganglion, expression is seen in the neural cells located in the subesophagial region, along the ventral midline and in thoracic and abdominal segments. In the adult brain, expression is seen in the medulla and the mushroom body calyx (at protein level).

Its subcellular location is the secreted. Plays a role in controlling food intake and regulating body size. This chain is Short neuropeptide F (sNPF), found in Drosophila melanogaster (Fruit fly).